The sequence spans 62 residues: Large ribosomal subunit protein uL29 (62 aa).

Belongs to the universal ribosomal protein uL29 family.

In Chromobacterium violaceum (strain ATCC 12472 / DSM 30191 / JCM 1249 / CCUG 213 / NBRC 12614 / NCIMB 9131 / NCTC 9757 / MK), this protein is Large ribosomal subunit protein uL29.